The sequence spans 299 residues: Biotin transporter (299 aa).

10 helical membrane-spanning segments follow: residues 2 to 22 (ALLIITTILWAFSFSLFGEYL), 26 to 46 (VDSYFAVLIRVGLAALVFLPF), 56 to 76 (TISLYMLVGAMQLGIMYMLSF), 81 to 101 (YLTVSELLLFTVLTPLYITLI), 110 to 130 (LRWGYAFSALLAVIGAGIIRY), 137 to 157 (FWVGLLLVQLSNISFAIGMVG), 172 to 192 (AFAWFYLGAFLVAAVAWSLLG), 202 to 222 (LQWSILVFLGVVASGIGYFMW), 233 to 253 (TLGIMNNMHVPAGLLVNLAIW), and 256 to 276 (QPHWPSFITGAAVILASLWVH). 2 EamA domains span residues 3–128 (LLII…AGII) and 139–274 (VGLL…ASLW).

This sequence belongs to the drug/metabolite transporter (DMT) superfamily. 10 TMS drug/metabolite exporter (DME) (TC 2.A.7.3) family.

It localises to the cell inner membrane. The enzyme catalyses biotin(in) = biotin(out). Functionally, uptake of biotin. The sequence is that of Biotin transporter from Salmonella typhi.